Reading from the N-terminus, the 278-residue chain is MPSPSSHTELPDSSSLRHILAVAHSPLAEPGVARTLATELGLDWLGVVAPKQVRDYGLLLFMDEHGLALQQTGKGAPGPVRAEFVSGKMGYRREHGGGAGQLVARAVGMQKTRAPLQVLDATAGLGQDAFVLASLGCQMTLFERNPIIHALLADGLYRASLNEACAPIVARMTLHSGNSLDWMNQAGPEAVDVVYLDPMFPHRDKSALVKKEMQVFRQVVGDDDDASQLLEAALGCARYRVVVKRPRKAPAIAGPEPAARVEGKSSRYDIYPIRALPA.

Residues 143 to 144 (ER) and Asp-197 each bind S-adenosyl-L-methionine.

It belongs to the methyltransferase superfamily. RsmJ family.

Its subcellular location is the cytoplasm. The catalysed reaction is guanosine(1516) in 16S rRNA + S-adenosyl-L-methionine = N(2)-methylguanosine(1516) in 16S rRNA + S-adenosyl-L-homocysteine + H(+). In terms of biological role, specifically methylates the guanosine in position 1516 of 16S rRNA. The sequence is that of Ribosomal RNA small subunit methyltransferase J from Marinobacter nauticus (strain ATCC 700491 / DSM 11845 / VT8) (Marinobacter aquaeolei).